Reading from the N-terminus, the 310-residue chain is Beta-ketoacyl-[acyl-carrier-protein] synthase III (310 aa).

Catalysis depends on residues Cys-112 and His-235. Residues 236–240 form an ACP-binding region; it reads QANIR. Asn-265 is an active-site residue.

This sequence belongs to the thiolase-like superfamily. FabH family. In terms of assembly, homodimer.

It localises to the cytoplasm. It carries out the reaction malonyl-[ACP] + acetyl-CoA + H(+) = 3-oxobutanoyl-[ACP] + CO2 + CoA. The protein operates within lipid metabolism; fatty acid biosynthesis. Its function is as follows. Catalyzes the condensation reaction of fatty acid synthesis by the addition to an acyl acceptor of two carbons from malonyl-ACP. Catalyzes the first condensation reaction which initiates fatty acid synthesis and may therefore play a role in governing the total rate of fatty acid production. Possesses both acetoacetyl-ACP synthase and acetyl transacylase activities. Its substrate specificity determines the biosynthesis of branched-chain and/or straight-chain of fatty acids. This Geobacillus kaustophilus (strain HTA426) protein is Beta-ketoacyl-[acyl-carrier-protein] synthase III.